The following is a 600-amino-acid chain: MTKLSHIRNFSIVAHIDHGKSTLADRLIQACGAIEAREMKEQMLDSMDIERERGITIKAQTVRLDYKAKDGKTYQLNLMDTPGHVDFAYEVSRSLAACEGSLLVVDASQGVEAQTLANVYHALDAGHEVVPVLNKIDLPAAEPERVKQQIEDVIGLDTSDAVMISAKTGIGIGDVLEALVNRLPCPEGDADAPLQALLVDSWYDPYLGVIILVRIKNGVLKKGQKIRMMATQAAYQVDSCGYFTPKLVQTTELRPGEMGFFTAAIKAVADTKVGDTVTDDKKPADTPLPGFKPSVPVVWCGLFPIDAADYEDLRDSLAKLRLNDASFQYEPETSAALGFGFRCGFLGLLHLEIIQERLEREFNLDLITTAPSVVYRVHKTNGEMEELHNPADMPDPARIDHMEEPWIKATIMVPDEYLGPVLTLCTERRGQQIDLTYAGSRAMAVYKLPLNEVVFDFYDRLKSISRGYASFDYEVDSYAQSDLVKVSILVNAEPVDALSFVVHRANAESRGRGICTRLKELIPRQMFQIAIQAAIGGRIVARESISALRKDVTAKCYGGDATRKRKLLEKQKEGKKRMRQFGKVEIPQSAFLAALKMGDS.

One can recognise a tr-type G domain in the interval 5 to 187; sequence SHIRNFSIVA…ALVNRLPCPE (183 aa). GTP-binding positions include 17–22 and 134–137; these read DHGKST and NKID.

The protein belongs to the TRAFAC class translation factor GTPase superfamily. Classic translation factor GTPase family. LepA subfamily.

It is found in the cell inner membrane. The catalysed reaction is GTP + H2O = GDP + phosphate + H(+). In terms of biological role, required for accurate and efficient protein synthesis under certain stress conditions. May act as a fidelity factor of the translation reaction, by catalyzing a one-codon backward translocation of tRNAs on improperly translocated ribosomes. Back-translocation proceeds from a post-translocation (POST) complex to a pre-translocation (PRE) complex, thus giving elongation factor G a second chance to translocate the tRNAs correctly. Binds to ribosomes in a GTP-dependent manner. The polypeptide is Elongation factor 4 (Paramagnetospirillum magneticum (strain ATCC 700264 / AMB-1) (Magnetospirillum magneticum)).